The following is a 430-amino-acid chain: Pre-B-cell leukemia transcription factor 2 (430 aa).

The tract at residues 1 to 52 is disordered; the sequence is MDERLLGPPPPGGGRGGLGLVSGEPGGPGEPPGGGDPGGGSGGVPGGRGKQD. The segment covering 13–48 has biased composition (gly residues); sequence GGRGGLGLVSGEPGGPGEPPGGGDPGGGSGGVPGGR. The PBC domain occupies 48–243; it reads RGKQDIGDIL…VMILRSRFLD (196 aa). Residues 55 to 134 are PBC-A; sequence DILQQIMTIT…EGVAGPEKGG (80 aa). Ser-136, Ser-151, and Ser-159 each carry phosphoserine. Residues 137–243 form a PBC-B region; it reads AAAAAAAAAS…VMILRSRFLD (107 aa). The segment at residues 244–306 is a DNA-binding region (homeobox; TALE-type); that stretch reads ARRKRRNFSK…NKRIRYKKNI (63 aa). 2 disordered regions span residues 326 to 347 and 378 to 430; these read QGGH…GGSF and SMGP…DTSN. Position 330 is a phosphoserine (Ser-330). Over residues 380–392 the composition is skewed to gly residues; it reads GPGGYGDNLGGGQ. Residue Ser-395 is modified to Phosphoserine. The span at 403–418 shows a compositional bias: polar residues; the sequence is GSWQEAVTPSSVTSPT.

This sequence belongs to the TALE/PBX homeobox family. Forms heterodimers with MEIS1 and heterotrimers with MEIS1 and HOXA9. Interacts with PBXIP1. In terms of tissue distribution, ubiquitously expressed.

It is found in the nucleus. Functionally, transcriptional activator that binds the sequence 5'-ATCAATCAA-3'. Activates transcription of PF4 in complex with MEIS1. The chain is Pre-B-cell leukemia transcription factor 2 (PBX2) from Homo sapiens (Human).